The following is a 293-amino-acid chain: Nitrogenase iron protein (293 aa).

10-17 (GKGGIGKS) is an ATP binding site. C98 serves as a coordination point for [4Fe-4S] cluster. R101 is subject to ADP-ribosylarginine; by dinitrogenase reductase ADP-ribosyltransferase. C133 contacts [4Fe-4S] cluster.

The protein belongs to the NifH/BchL/ChlL family. As to quaternary structure, homodimer. Requires [4Fe-4S] cluster as cofactor. The reversible ADP-ribosylation of Arg-101 inactivates the nitrogenase reductase and regulates nitrogenase activity.

The enzyme catalyses N2 + 8 reduced [2Fe-2S]-[ferredoxin] + 16 ATP + 16 H2O = H2 + 8 oxidized [2Fe-2S]-[ferredoxin] + 2 NH4(+) + 16 ADP + 16 phosphate + 6 H(+). Its function is as follows. The key enzymatic reactions in nitrogen fixation are catalyzed by the nitrogenase complex, which has 2 components: the iron protein and the molybdenum-iron protein. This chain is Nitrogenase iron protein, found in Stutzerimonas stutzeri (strain A1501) (Pseudomonas stutzeri).